The following is a 503-amino-acid chain: UDP-N-acetylmuramoyl-L-alanyl-D-glutamate--2,6-diaminopimelate ligase (503 aa).

Ser-32 serves as a coordination point for UDP-N-acetyl-alpha-D-muramoyl-L-alanyl-D-glutamate. ATP is bound at residue Gly-117–Thr-123. UDP-N-acetyl-alpha-D-muramoyl-L-alanyl-D-glutamate contacts are provided by residues Thr-159–Thr-160, Ser-186, Gln-192, and Arg-194. An N6-carboxylysine modification is found at Lys-226. Residues Arg-396, Asp-420–Arg-423, Gly-471, and Glu-475 contribute to the meso-2,6-diaminopimelate site. A Meso-diaminopimelate recognition motif motif is present at residues Asp-420–Arg-423.

Belongs to the MurCDEF family. MurE subfamily. Mg(2+) is required as a cofactor. In terms of processing, carboxylation is probably crucial for Mg(2+) binding and, consequently, for the gamma-phosphate positioning of ATP.

The protein localises to the cytoplasm. It catalyses the reaction UDP-N-acetyl-alpha-D-muramoyl-L-alanyl-D-glutamate + meso-2,6-diaminopimelate + ATP = UDP-N-acetyl-alpha-D-muramoyl-L-alanyl-gamma-D-glutamyl-meso-2,6-diaminopimelate + ADP + phosphate + H(+). Its pathway is cell wall biogenesis; peptidoglycan biosynthesis. Functionally, catalyzes the addition of meso-diaminopimelic acid to the nucleotide precursor UDP-N-acetylmuramoyl-L-alanyl-D-glutamate (UMAG) in the biosynthesis of bacterial cell-wall peptidoglycan. The chain is UDP-N-acetylmuramoyl-L-alanyl-D-glutamate--2,6-diaminopimelate ligase from Prochlorococcus marinus (strain SARG / CCMP1375 / SS120).